The chain runs to 770 residues: MPYVGVGAQTVSTSLTGAPMVKAYIAIAASLIFVFCIAALGVHHSERKFNKFNKVSIDDIHKSDAGVIQDNIKTENIKKYLRIFTKDPHVAGTEANKKVAYEIANAWSEAGLEDVHTLPYEVLLSYPDFENPNSVIIKSSAGKEVFKSKGVSPVIIPDEQSGKYAGHQWLAYAGNGSASADVVYINHGTANDFKNLKLMGVDIKGKIALMRYGHGFRGDKIHKAQQAGAIGAILFSDTQDVAQDGVESENVYPKKIWMPNEGVQRGSLMHGDGDALSPYYPSKKELFKGRTIEEAKEDGVLPSIPVLPVSYTTGYEILKRLSGRPAPSDWQGFVGGNLTYKLGPGFVNGEKLSINVHSELRTKRIRNVIGYIRGSEEPDSYIMLGNHFDAWVYGSIDPNSGTAVLAEVARAMMQTINETSWKPARTIVFNAWDAEEFGLIGSTEFVEEFVNILQKRAVVYINMDCIQGNISLHVDTVPILEHAVIEASKQVENPSKRERSRGRKTLYDTWMKVFPDKKAGVPKIRVPGGGSDHAPFLNFAGVPVINFTFKNYTTWDTYPLYHTMYETPFSNIHLLDTDNLSVHKAIGQYWAELAKTFADDVILPMNTTHFASVMLKTYLPQLKTTISGINVSRSDFEDIRTQYALLSKSAQDLLTMSKKFQETIHFTQHSFSQNPYDPKHVNAVNERLKSTERCFINPRGVSMHNPSARHVLFSVSDSDSYSSSLMAGVQNAINSYDLNPTKKGLREIINQISIVQYSVICVVNTLRDVI.

The Cytoplasmic portion of the chain corresponds to 1–25 (MPYVGVGAQTVSTSLTGAPMVKAYI). A helical; Signal-anchor for type II membrane protein membrane pass occupies residues 26–42 (AIAASLIFVFCIAALGV). At 43–770 (HHSERKFNKF…CVVNTLRDVI (728 aa)) the chain is on the extracellular side. N-linked (GlcNAc...) asparagine glycosylation is found at N175 and N337. The segment at 282–597 (SKKELFKGRT…QYWAELAKTF (316 aa)) is catalytic. Positions 387 and 397 each coordinate Zn(2+). N417 is a glycosylation site (N-linked (GlcNAc...) asparagine). Catalysis depends on E435, which acts as the Nucleophile. 2 residues coordinate Zn(2+): E436 and D464. Residues N469, N546, and N551 are each glycosylated (N-linked (GlcNAc...) asparagine). H562 is a Zn(2+) binding site. N-linked (GlcNAc...) asparagine glycosylation is found at N579, N606, and N630.

The protein belongs to the peptidase M28 family. M28B subfamily. Requires Zn(2+) as cofactor.

The protein resides in the membrane. It carries out the reaction Release of an unsubstituted, C-terminal glutamyl residue, typically from Ac-Asp-Glu or folylpoly-gamma-glutamates.. This Caenorhabditis elegans protein is Glutamate carboxypeptidase 2 homolog.